A 171-amino-acid chain; its full sequence is MLRLLEEKIATPLGPLWVICDEQFRLRAVEWEEYSERMVQLLDIHYRKEGYERISATNPGGLSDKLREYFAGNLSIIDTLPTATGGTPFQREVWKTLRTIPCGQVMHYGQLAEQLGRPGAARAVGAANGSNPISIVVPCHRVIGRNGTMTGYAGGVQRKEWLLRHEGYLLL.

Residue cysteine 139 is the Nucleophile; methyl group acceptor of the active site.

The protein belongs to the MGMT family.

The protein resides in the cytoplasm. The enzyme catalyses a 6-O-methyl-2'-deoxyguanosine in DNA + L-cysteinyl-[protein] = S-methyl-L-cysteinyl-[protein] + a 2'-deoxyguanosine in DNA. The catalysed reaction is a 4-O-methyl-thymidine in DNA + L-cysteinyl-[protein] = a thymidine in DNA + S-methyl-L-cysteinyl-[protein]. Involved in the cellular defense against the biological effects of O6-methylguanine (O6-MeG) and O4-methylthymine (O4-MeT) in DNA. Repairs the methylated nucleobase in DNA by stoichiometrically transferring the methyl group to a cysteine residue in the enzyme. This is a suicide reaction: the enzyme is irreversibly inactivated. This Shigella flexneri protein is Methylated-DNA--protein-cysteine methyltransferase.